Consider the following 752-residue polypeptide: Kaurene synthase like 2, chloroplastic (752 aa).

Residues 1-28 (MSLLLSNSALVGPKFRSSRISHASASLD) constitute a chloroplast transit peptide. Mg(2+) is bound by residues Asp-538, Asp-542, Asn-682, and Glu-690. The short motif at 538-542 (DDLFD) is the DDXXD motif element.

It belongs to the terpene synthase family. Requires Mg(2+) as cofactor. In terms of tissue distribution, highly expressed in leaves.

The protein localises to the plastid. The protein resides in the chloroplast. It functions in the pathway secondary metabolite biosynthesis; terpenoid biosynthesis. In terms of biological role, involved in the biosynthesis of ent-kaurene diterpenoids natural products such as oridonin, miltiradiene, eriocalyxin B and nezukol, known to exhibit antitumor, anti-inflammatory and antibacterial activities. Catalyzes the conversion of ent-copalyl diphosphate (ent-CPP) to ent-isopimaradiene like compounds. The chain is Kaurene synthase like 2, chloroplastic from Isodon rubescens (Rabdosia rubescens).